The following is a 104-amino-acid chain: Flagellar hook-basal body complex protein FliE (104 aa).

It belongs to the FliE family.

It localises to the bacterial flagellum basal body. The protein is Flagellar hook-basal body complex protein FliE of Escherichia fergusonii (strain ATCC 35469 / DSM 13698 / CCUG 18766 / IAM 14443 / JCM 21226 / LMG 7866 / NBRC 102419 / NCTC 12128 / CDC 0568-73).